Reading from the N-terminus, the 438-residue chain is Trigger factor (438 aa).

One can recognise a PPIase FKBP-type domain in the interval 170-255 (GDTVVIDFDG…IHELKKLETP (86 aa)).

This sequence belongs to the FKBP-type PPIase family. Tig subfamily.

It localises to the cytoplasm. It carries out the reaction [protein]-peptidylproline (omega=180) = [protein]-peptidylproline (omega=0). Its function is as follows. Involved in protein export. Acts as a chaperone by maintaining the newly synthesized protein in an open conformation. Functions as a peptidyl-prolyl cis-trans isomerase. The sequence is that of Trigger factor (tig) from Oenococcus oeni (Leuconostoc oenos).